We begin with the raw amino-acid sequence, 235 residues long: Ubiquinone biosynthesis O-methyltransferase (235 aa).

The S-adenosyl-L-methionine site is built by Arg-39, Gly-59, Asp-80, and Met-124.

It belongs to the methyltransferase superfamily. UbiG/COQ3 family.

The catalysed reaction is a 3-demethylubiquinol + S-adenosyl-L-methionine = a ubiquinol + S-adenosyl-L-homocysteine + H(+). It carries out the reaction a 3-(all-trans-polyprenyl)benzene-1,2-diol + S-adenosyl-L-methionine = a 2-methoxy-6-(all-trans-polyprenyl)phenol + S-adenosyl-L-homocysteine + H(+). It functions in the pathway cofactor biosynthesis; ubiquinone biosynthesis. In terms of biological role, O-methyltransferase that catalyzes the 2 O-methylation steps in the ubiquinone biosynthetic pathway. The sequence is that of Ubiquinone biosynthesis O-methyltransferase from Vibrio parahaemolyticus serotype O3:K6 (strain RIMD 2210633).